Consider the following 285-residue polypeptide: Inositol monophosphatase 1 (285 aa).

Mg(2+) is bound by residues Glu-73, Asp-93, Ile-95, and Asp-96. Residue Glu-73 participates in substrate binding. Residues 95 to 98 (IDGT), 198 to 200 (GTA), Glu-217, and Asp-224 contribute to the substrate site. A Mg(2+)-binding site is contributed by Asp-224.

The protein belongs to the inositol monophosphatase superfamily. In terms of assembly, homodimer. It depends on Mg(2+) as a cofactor.

The protein resides in the cytoplasm. The catalysed reaction is a myo-inositol phosphate + H2O = myo-inositol + phosphate. The enzyme catalyses 1D-myo-inositol 1-phosphate + H2O = myo-inositol + phosphate. It catalyses the reaction 1D-myo-inositol 2-phosphate + H2O = myo-inositol + phosphate. It carries out the reaction 1D-myo-inositol 3-phosphate + H2O = myo-inositol + phosphate. The catalysed reaction is 1D-myo-inositol 4-phosphate + H2O = myo-inositol + phosphate. The enzyme catalyses 1D-myo-inositol 5-phosphate + H2O = myo-inositol + phosphate. It catalyses the reaction 1D-myo-inositol 6-phosphate + H2O = myo-inositol + phosphate. It carries out the reaction scyllo-inositol 1-phosphate + H2O = scyllo-inositol + phosphate. The catalysed reaction is alpha-D-galactose 1-phosphate + H2O = D-galactose + phosphate. The enzyme catalyses alpha-D-glucose 1-phosphate + H2O = D-glucose + phosphate. It catalyses the reaction D-glucose 6-phosphate + H2O = D-glucose + phosphate. It carries out the reaction beta-D-fructose 1-phosphate + H2O = D-fructose + phosphate. The catalysed reaction is glycerol 2-phosphate + H2O = glycerol + phosphate. The enzyme catalyses adenosine 2'-phosphate + H2O = adenosine + phosphate. Its pathway is polyol metabolism; myo-inositol biosynthesis; myo-inositol from D-glucose 6-phosphate: step 2/2. Inhibited by Li(+), Ca(2+) and Mn(2+), but also by Mg(2+) at concentrations above 3 mM. Functionally, phosphatase involved in the dephosphorylation of myo-inositol monophosphate to generate myo-inositol. Is also able to dephosphorylate scyllo-inositol-phosphate, myo-inositol 1,4-diphosphate, scyllo-inositol-1,3-diphosphate and scyllo-inositol-1,4-diphosphate. Also dephosphorylates in vitro other sugar-phosphates including D-galactose-1-phosphate, glucose-1-phosphate, glucose-6-phosphate, fructose-1-phosphate, beta-glycerophosphate and 2'-AMP. Responsible for the provision of inositol required for synthesis of phosphatidylinositol and polyphosphoinositides, and involved in maintaining normal brain function. Has been implicated as the pharmacological target for lithium Li(+) action in brain. In Xenopus laevis (African clawed frog), this protein is Inositol monophosphatase 1 (impa1).